A 555-amino-acid chain; its full sequence is NADH-ubiquinone oxidoreductase chain 5 (555 aa).

The next 15 helical transmembrane spans lie at 37-57 (LAMT…LYAI), 69-89 (FYII…SDNY), 90-110 (IMMF…ISFW), 133-153 (FFML…FDTL), 155-175 (LAAP…LLLA), 197-217 (TPVS…YVLV), 230-250 (LIGI…IAIV), 257-275 (VIAL…AIGI), 287-307 (CHAF…HSYI), 323-343 (LPFS…IPGL), 366-388 (ILYY…VLYL), 406-426 (ENIR…FIGF), 454-474 (WYIK…LVYI), 494-516 (IYYD…GYLN), and 534-554 (RALT…FFFY).

Belongs to the complex I subunit 5 family.

It localises to the mitochondrion inner membrane. It carries out the reaction a ubiquinone + NADH + 5 H(+)(in) = a ubiquinol + NAD(+) + 4 H(+)(out). In terms of biological role, core subunit of the mitochondrial membrane respiratory chain NADH dehydrogenase (Complex I) that is believed to belong to the minimal assembly required for catalysis. Complex I functions in the transfer of electrons from NADH to the respiratory chain. The immediate electron acceptor for the enzyme is believed to be ubiquinone. This chain is NADH-ubiquinone oxidoreductase chain 5 (ND5), found in Candida parapsilosis (Yeast).